The sequence spans 210 residues: MSDAKELKQVLTGPIVNNNPIALQVLGVCSALAVTSKLETALVMALALTAVTAFSNLFISMIRNHIPSSVRIIVQMTIIASLVIVVDQLLQAYAYQISKQLSVFVGLIITNCIVMGRAEAYAMKTPPMMSFMDGIGNGLGYGAILLAVGFVRELFGNGSLFGVEILHKISDGGWYQPNGLLLLPPSAFFLIGVLIWIIRTYKPEQVEAKG.

The next 6 membrane-spanning stretches (helical) occupy residues Pro-14–Val-34, Leu-42–Ile-62, Ile-72–Ala-92, Val-103–Met-123, Phe-131–Val-151, and Asn-178–Ile-198.

Belongs to the NqrDE/RnfAE family. In terms of assembly, composed of six subunits; NqrA, NqrB, NqrC, NqrD, NqrE and NqrF.

It is found in the cell inner membrane. The enzyme catalyses a ubiquinone + n Na(+)(in) + NADH + H(+) = a ubiquinol + n Na(+)(out) + NAD(+). Its function is as follows. NQR complex catalyzes the reduction of ubiquinone-1 to ubiquinol by two successive reactions, coupled with the transport of Na(+) ions from the cytoplasm to the periplasm. NqrA to NqrE are probably involved in the second step, the conversion of ubisemiquinone to ubiquinol. This Shewanella baltica (strain OS223) protein is Na(+)-translocating NADH-quinone reductase subunit D.